Consider the following 354-residue polypeptide: CX3C chemokine receptor 1 (354 aa).

At 1 to 32 (MSTSFPELDLENFEYDDSAEACYLGDIVAFGT) the chain is on the extracellular side. The chain crosses the membrane as a helical span at residues 33-60 (IFLSVFYALVFTFGLVGNLLVVLALTNS). Residues 61-70 (RKPKSITDIY) lie on the Cytoplasmic side of the membrane. The chain crosses the membrane as a helical span at residues 71–91 (LLNLALSDLLFVATLPFWTHY). Residues 92 to 104 (LISHEGLHNAMCK) lie on the Extracellular side of the membrane. An intrachain disulfide couples cysteine 103 to cysteine 176. Residues 105 to 126 (LTTAFFFIGFFGGIFFITVISI) traverse the membrane as a helical segment. Topologically, residues 127 to 143 (DRYLAIVLAANSMNNRT) are cytoplasmic. The helical transmembrane segment at 144–168 (VQHGVTISLGVWAAAILVASPQFMF) threads the bilayer. The Extracellular portion of the chain corresponds to 169 to 196 (TKRKDNECLGDYPEVLQEMWPVLRNSEV). The helical transmembrane segment at 197–216 (NILGFALPLLIMSFCYFRII) threads the bilayer. Residues 217–232 (QTLFSCKNRKKARAVR) are Cytoplasmic-facing. Residues 233-257 (LILLVVFAFFLFWTPYNIMIFLETL) form a helical membrane-spanning segment. Topologically, residues 258 to 274 (KFYNFFPSCDMKRDLRL) are extracellular. The helical transmembrane segment at 275–298 (ALSVTETVAFSHCCLNPFIYAFAG) threads the bilayer. The Cytoplasmic segment spans residues 299–354 (EKFRRYLGHLYRKCLAVLCGHPVHTGFSPESQRSRQDSILSSFTHYTSEGDGSLLL). Threonine 345 bears the Phosphothreonine mark.

It belongs to the G-protein coupled receptor 1 family. As to quaternary structure, found in a ternary complex with CX3CL1 and ITGAV:ITGB3 or ITGA4:ITGB1. In terms of processing, this protein is not N-glycosylated which is unusual for G-protein-coupled receptors. Specifically expressed in subsets of leukocytes: expressed in monocytes, subsets of T-cells and natural killer (NK) cells in the circulation, dendritic cells, as well as in microglia in the central nervous system (CNS). Expression level subdivides blood monocytes into two major functional subsets; CD14(+)CD16(-)-CX3CR1(low) inflammatory monocytes and CD14(low)CD16(+)CX3CR1(high) homeostatic monocytes. Expressed in myeloid-derived mucosal dendritic cells, which populate the entire lamina propria of the small intestine.

Its subcellular location is the cell membrane. Functionally, receptor for the C-X3-C chemokine fractalkine (CX3CL1) present on many early leukocyte cells; CX3CR1-CX3CL1 signaling exerts distinct functions in different tissue compartments, such as immune response, inflammation, cell adhesion and chemotaxis. CX3CR1-CX3CL1 signaling mediates cell migratory functions. Responsible for the recruitment of natural killer (NK) cells to inflamed tissues. Acts as a regulator of inflammation process leading to atherogenesis by mediating macrophage and monocyte recruitment to inflamed atherosclerotic plaques, promoting cell survival. Involved in airway inflammation by promoting interleukin 2-producing T helper (Th2) cell survival in inflamed lung. Involved in the migration of circulating monocytes to non-inflamed tissues, where they differentiate into macrophages and dendritic cells. Acts as a negative regulator of angiogenesis, probably by promoting macrophage chemotaxis. Plays a key role in brain microglia by regulating inflammatory response in the central nervous system (CNS) and regulating synapse maturation. Required to restrain the microglial inflammatory response in the CNS and the resulting parenchymal damage in response to pathological stimuli. Involved in brain development by participating in synaptic pruning, a natural process during which brain microglia eliminates extra synapses during postnatal development. Synaptic pruning by microglia is required to promote the maturation of circuit connectivity during brain development. Acts as an important regulator of the gut microbiota by controlling immunity to intestinal bacteria and fungi. Expressed in lamina propria dendritic cells in the small intestine, which form transepithelial dendrites capable of taking up bacteria in order to provide defense against pathogenic bacteria. Required to initiate innate and adaptive immune responses against dissemination of commensal fungi (mycobiota) component of the gut: expressed in mononuclear phagocytes (MNPs) and acts by promoting induction of antifungal IgG antibodies response to confer protection against disseminated C.albicans or C.auris infection. Also acts as a receptor for C-C motif chemokine CCL26, inducing cell chemotaxis. In Mus musculus (Mouse), this protein is CX3C chemokine receptor 1.